The chain runs to 1170 residues: Probable mRNA-capping enzyme (1170 aa).

Lys292 acts as the N6-GMP-lysine intermediate in catalysis. Residues 684 to 1007 (SNAAGMRAFN…LNRYYVFRKT (324 aa)) form the mRNA cap 0 methyltransferase domain. 693–694 (NN) contacts mRNA. S-adenosyl-L-methionine contacts are provided by residues Lys697, Gly715, Asp737, and 813-815 (QFT).

In the N-terminal section; belongs to the dsDNA virus mRNA guanylyltransferase family. This sequence in the C-terminal section; belongs to the class I-like SAM-binding methyltransferase superfamily. mRNA cap 0 methyltransferase family.

Its subcellular location is the virion. The catalysed reaction is a 5'-end triphospho-ribonucleoside in mRNA + H2O = a 5'-end diphospho-ribonucleoside in mRNA + phosphate + H(+). The enzyme catalyses a 5'-end diphospho-ribonucleoside in mRNA + GTP + H(+) = a 5'-end (5'-triphosphoguanosine)-ribonucleoside in mRNA + diphosphate. It catalyses the reaction a 5'-end (5'-triphosphoguanosine)-ribonucleoside in mRNA + S-adenosyl-L-methionine = a 5'-end (N(7)-methyl 5'-triphosphoguanosine)-ribonucleoside in mRNA + S-adenosyl-L-homocysteine. It participates in mRNA processing; mRNA capping. Responsible for methylating the 5'-cap structure of mRNAs. The polypeptide is Probable mRNA-capping enzyme (Acanthamoeba polyphaga mimivirus (APMV)).